We begin with the raw amino-acid sequence, 185 residues long: Ribosome-recycling factor (185 aa).

The protein belongs to the RRF family.

Its subcellular location is the cytoplasm. Responsible for the release of ribosomes from messenger RNA at the termination of protein biosynthesis. May increase the efficiency of translation by recycling ribosomes from one round of translation to another. In Kocuria rhizophila (strain ATCC 9341 / DSM 348 / NBRC 103217 / DC2201), this protein is Ribosome-recycling factor.